The primary structure comprises 275 residues: Subtilisin (275 aa).

Residue Q2 coordinates Ca(2+). Residues P5 to A274 enclose the Peptidase S8 domain. D32 (charge relay system) is an active-site residue. A Ca(2+)-binding site is contributed by D41. H64 functions as the Charge relay system in the catalytic mechanism. Positions 75, 77, 79, 81, 169, 171, and 174 each coordinate Ca(2+). S221 serves as the catalytic Charge relay system.

The protein belongs to the peptidase S8 family. Ca(2+) serves as cofactor.

It is found in the secreted. It catalyses the reaction Hydrolysis of proteins with broad specificity for peptide bonds, and a preference for a large uncharged residue in P1. Hydrolyzes peptide amides.. Its function is as follows. Subtilisin is an extracellular alkaline serine protease, it catalyzes the hydrolysis of proteins and peptide amides. The protein is Subtilisin (apr) of Bacillus pumilus (Bacillus mesentericus).